Consider the following 579-residue polypeptide: Arginine--tRNA ligase (579 aa).

The 'HIGH' region motif lies at 123-133 (PNLAKEMHVGH).

Belongs to the class-I aminoacyl-tRNA synthetase family. In terms of assembly, monomer.

The protein resides in the cytoplasm. The enzyme catalyses tRNA(Arg) + L-arginine + ATP = L-arginyl-tRNA(Arg) + AMP + diphosphate. The protein is Arginine--tRNA ligase of Cellvibrio japonicus (strain Ueda107) (Pseudomonas fluorescens subsp. cellulosa).